Here is a 325-residue protein sequence, read N- to C-terminus: DNA-directed RNA polymerase subunit alpha (325 aa).

An alpha N-terminal domain (alpha-NTD) region spans residues 1 to 238; the sequence is MSPKNLLKGF…DHLTVFINFE (238 aa). The tract at residues 255 to 325 is alpha C-terminal domain (alpha-CTD); the sequence is LKAALSKHVE…MGLSFGMRDF (71 aa).

This sequence belongs to the RNA polymerase alpha chain family. In terms of assembly, homodimer. The RNAP catalytic core consists of 2 alpha, 1 beta, 1 beta' and 1 omega subunit. When a sigma factor is associated with the core the holoenzyme is formed, which can initiate transcription.

It catalyses the reaction RNA(n) + a ribonucleoside 5'-triphosphate = RNA(n+1) + diphosphate. Functionally, DNA-dependent RNA polymerase catalyzes the transcription of DNA into RNA using the four ribonucleoside triphosphates as substrates. The protein is DNA-directed RNA polymerase subunit alpha of Leptospira biflexa serovar Patoc (strain Patoc 1 / Ames).